The primary structure comprises 240 residues: Uridylate kinase (240 aa).

An ATP-binding site is contributed by 12 to 15 (KLSG). Gly-54 contributes to the UMP binding site. ATP-binding residues include Gly-55 and Arg-59. Residues Asp-74 and 135-142 (TGNPFFTT) each bind UMP. Thr-162, Tyr-168, and Asp-171 together coordinate ATP.

The protein belongs to the UMP kinase family. Homohexamer.

The protein resides in the cytoplasm. It catalyses the reaction UMP + ATP = UDP + ADP. The protein operates within pyrimidine metabolism; CTP biosynthesis via de novo pathway; UDP from UMP (UMPK route): step 1/1. Inhibited by UTP. Functionally, catalyzes the reversible phosphorylation of UMP to UDP. The protein is Uridylate kinase of Xanthomonas axonopodis pv. citri (strain 306).